Reading from the N-terminus, the 887-residue chain is MLNKFIVIVTMLAMWNYAQDCNFELSKNETVQFTSFLPLILNCASISKFDTDLCETINDERPYNWYFQNKKIGNETKGKIKLVSSSQQMIIFNGSASDEGNYMCETINNNKEFISKTFDARMIEPSMTQMELLLNSFPNDHQEEINGRIYWLPEMILNHIRDVVIINQGAESDLHSFYYVSGSDSQISTFDVQWYFHYQPKSEDKTIIDHNIKTFYSSCNDLDLLPRKVNGSCYSSRLYLYNVEIKDQGFYSVEATLRMKNGSSHGLNFTYELKINIANILDPDKTNSILSTPQISFNLNSRVCINDRFDWICKVTPVVSYYVTIYKNNSNPNNITVLAESEVLQMNIDGNSGQGFYLKSSTVNYSVNSVQREHAGVYACRIINFKDYSSDHQNRHEPEVLMRLTVKDCVGNSYFTIIWYSISVGIIILVVISFLIIRLYNKYSNGYIVKTVIVQHPNKLYVPHDTCFPLLMPDITIKTIHKHINSSEDSLLQQKHFTNNSNIPFSQKISKYFRKSFIFSYRHVDVSSSNLDSPLGVISNTETNKLTSNSLTVETQRPQLILQNDANTKYILPSNIGWIFSRDSLIIGSKIGEGAFGIVYSALVKSFSENSASVEVAIKTLHTSFGDQDVINLIQELEMMKIIGRHRHIISLYGACIDNGHPYMVIELAKHGNLRDFLRAQRSQSKVGEIQNSGGLVTRLTVTDFLRFSIEIAEGMEYLSSRKIIHRDLAARNVLVDQYVEMKIADFGLTRIVENYYRKTTDGRLPIKWMAPECLLDRVYTVKSDVWSYGIVLWEIFTMGQTPYPTIQSDGMHQALRNGIRNEKPALASDEMYRLMLTIWNDDPLERHTFSEIIDKLTHIQLSNGGSSPKRDYLEISSNQCYSTTIV.

Residues 1–18 (MLNKFIVIVTMLAMWNYA) form the signal peptide. Residues 19–416 (QDCNFELSKN…KDCVGNSYFT (398 aa)) are Extracellular-facing. 2 consecutive Ig-like C2-type domains span residues 22 to 115 (NFEL…EFIS) and 180 to 260 (VSGS…LRMK). N-linked (GlcNAc...) asparagine glycosylation is found at N28, N74, N93, N230, N261, N268, N328, N334, and N364. A disulfide bridge connects residues C43 and C104. Residues 297–387 (FNLNSRVCIN…YACRIINFKD (91 aa)) enclose the Ig-like C2-type 3 domain. An intrachain disulfide couples C313 to C380. Residues 417–437 (IIWYSISVGIIILVVISFLII) form a helical membrane-spanning segment. Residues 438–887 (RLYNKYSNGY…SNQCYSTTIV (450 aa)) are Cytoplasmic-facing. A Protein kinase domain is found at 585 to 862 (LIIGSKIGEG…IIDKLTHIQL (278 aa)). Residues 591–599 (IGEGAFGIV) and K619 contribute to the ATP site. D728 (proton acceptor) is an active-site residue. Position 757 is a phosphotyrosine; by autocatalysis (Y757).

This sequence belongs to the protein kinase superfamily. Tyr protein kinase family. Fibroblast growth factor receptor subfamily. Expressed in brain, stem cells and the mesenchymal cells.

The protein localises to the membrane. The catalysed reaction is L-tyrosyl-[protein] + ATP = O-phospho-L-tyrosyl-[protein] + ADP + H(+). Its function is as follows. Receptor for basic fibroblast growth factor. This Dugesia japonica (Planarian) protein is Fibroblast growth factor receptor 2 (FGFR2).